The sequence spans 555 residues: MAMATATASSCVDATWWAYALPALLGADTLCAHPALLAGAVLLAFATAAVLAWAASPGGPAWAHGRGRLGATPIEGPRGLPVFGSIFALSRGLPHRALDAMSRDAAAPRARELMAFSVGETPAVVSSCPATAREVLAHPSFADRPLKRSARELLFARAIGFAPSGEYWRLLRRIASTHLFSPRRVAAHEPGRQADATAMLSAMAAEQSATGAVVLRPHLQAAALNNIMGSVFGRRYDVSSSSGAAADEAEQLKSMVREGFELLGAFNWSDHLPWLAHLYDPNHVARRCAALVPRVQAFVRGVIRDHRLRRDSSSTAADNADFVDVLLSLEAHENLAEDDMVAVLWEMIFRGTDTTALVTEWCMAEVVRNPAVQARLRAEVDAAVGGDGCPSDGDVARMPYLQAVVKETLRAHPPGPLLSWARLATADVGLANGMVVPAGTTAMVNMWAITHDGEVWADPEAFAPERFIPSEGGADVDVRGGDLRLAPFGAGRRVCPGKNLGLATVTLWVARLVHAFDWFLPDGSPPVSLDEVLKLSLEMKTPLAAAATPRRRRAA.

Residues 12–32 (VDATWWAYALPALLGADTLCA) traverse the membrane as a helical segment. C495 provides a ligand contact to heme.

This sequence belongs to the cytochrome P450 family. It depends on heme as a cofactor. In terms of tissue distribution, expressed in seedlings, shoot apices and young panicles, but not in mature leaves, calli and roots.

Its subcellular location is the membrane. Involved in the regular timing (plastochron) of lateral organs formation. May regulate the rate of leaf initiation and the duration of vegetative phase. Seems to be redundant to the function of PLASTOCHRON2, but to act in an independent pathway. This is Cytochrome P450 78A11 (CYP78A11) from Oryza sativa subsp. japonica (Rice).